The sequence spans 540 residues: Phosphoenolpyruvate carboxykinase (ATP) (540 aa).

Arg65 lines the substrate pocket. Lys87 is modified (N6-acetyllysine). Positions 207 and 213 each coordinate substrate. ATP-binding positions include Lys213, His232, and 248 to 256; that span reads GLSGTGKTT. Residues Lys213 and His232 each contribute to the Mn(2+) site. Asp269 serves as a coordination point for Mn(2+). ATP-binding positions include Glu297, Arg333, 449-450, and Thr455; that span reads RI. Arg333 serves as a coordination point for substrate. N6-acetyllysine is present on Lys523.

It belongs to the phosphoenolpyruvate carboxykinase (ATP) family. Monomer. Requires Mn(2+) as cofactor.

Its subcellular location is the cytoplasm. The enzyme catalyses oxaloacetate + ATP = phosphoenolpyruvate + ADP + CO2. It functions in the pathway carbohydrate biosynthesis; gluconeogenesis. In terms of biological role, involved in the gluconeogenesis. Catalyzes the conversion of oxaloacetate (OAA) to phosphoenolpyruvate (PEP) through direct phosphoryl transfer between the nucleoside triphosphate and OAA. This Shigella flexneri serotype 5b (strain 8401) protein is Phosphoenolpyruvate carboxykinase (ATP).